The following is a 338-amino-acid chain: Methionine synthase (338 aa).

Positions 210, 212, 234, and 294 each coordinate Zn(2+).

It belongs to the archaeal MetE family. Zn(2+) serves as cofactor.

It participates in amino-acid biosynthesis; L-methionine biosynthesis via de novo pathway. Functionally, catalyzes the transfer of a methyl group to L-homocysteine resulting in methionine formation. The physiological methyl donor is unknown. In Pyrococcus furiosus (strain ATCC 43587 / DSM 3638 / JCM 8422 / Vc1), this protein is Methionine synthase.